The sequence spans 290 residues: 4-hydroxybenzoate octaprenyltransferase (290 aa).

The next 8 membrane-spanning stretches (helical) occupy residues 23–43, 46–66, 99–119, 141–161, 163–183, 213–233, 234–254, and 268–288; these read IGAL…TPGV, LWIL…GCVV, LFVV…TMTI, LPQV…FAAV, ESVP…AVAY, LIIG…GELN, GLGW…VYQQ, and AFMN…MSYW.

The protein belongs to the UbiA prenyltransferase family. Mg(2+) is required as a cofactor.

It is found in the cell inner membrane. It catalyses the reaction all-trans-octaprenyl diphosphate + 4-hydroxybenzoate = 4-hydroxy-3-(all-trans-octaprenyl)benzoate + diphosphate. The protein operates within cofactor biosynthesis; ubiquinone biosynthesis. Catalyzes the prenylation of para-hydroxybenzoate (PHB) with an all-trans polyprenyl group. Mediates the second step in the final reaction sequence of ubiquinone-8 (UQ-8) biosynthesis, which is the condensation of the polyisoprenoid side chain with PHB, generating the first membrane-bound Q intermediate 3-octaprenyl-4-hydroxybenzoate. The chain is 4-hydroxybenzoate octaprenyltransferase from Escherichia coli (strain UTI89 / UPEC).